A 487-amino-acid polypeptide reads, in one-letter code: Betaine aldehyde dehydrogenase (487 aa).

Residues Ser26 and Asp93 each coordinate K(+). Position 150–152 (Gly150–Trp152) interacts with NAD(+). Lys162 serves as the catalytic Charge relay system. Residues Lys176–Glu179 and Ser229–Thr232 each bind NAD(+). Leu244 is a K(+) binding site. Glu250 functions as the Proton acceptor in the catalytic mechanism. Residues Gly252, Cys284, and Glu384 each coordinate NAD(+). Catalysis depends on Cys284, which acts as the Nucleophile. Position 284 is a cysteine sulfenic acid (-SOH) (Cys284). K(+)-binding residues include Lys454 and Gly457. Glu461 acts as the Charge relay system in catalysis.

It belongs to the aldehyde dehydrogenase family. Dimer of dimers. The cofactor is K(+).

It catalyses the reaction betaine aldehyde + NAD(+) + H2O = glycine betaine + NADH + 2 H(+). The protein operates within amine and polyamine biosynthesis; betaine biosynthesis via choline pathway; betaine from betaine aldehyde: step 1/1. Involved in the biosynthesis of the osmoprotectant glycine betaine. Catalyzes the irreversible oxidation of betaine aldehyde to the corresponding acid. The chain is Betaine aldehyde dehydrogenase from Rhizobium etli (strain ATCC 51251 / DSM 11541 / JCM 21823 / NBRC 15573 / CFN 42).